The chain runs to 148 residues: Cofilin/actin-depolymerizing factor homolog (148 aa).

Positions 4 to 143 (GVTVSDVCKT…SREAVEEKLR (140 aa)) constitute an ADF-H domain. The Nuclear localization signal motif lies at 19–23 (KKDKK).

This sequence belongs to the actin-binding proteins ADF family. Phosphorylated in vitro by protein kinase LIMK1. Phosphorylation is required for inactivation of tsr and for cell proliferation and axon growth. Phosphorylation is negatively regulated by the panthothenate kinase fbl which catalyzes the first step in the conversion of panthothenic acid to coenzyme A. In terms of processing, dephosphorylated by protein phosphatase ssh which activates tsr.

It is found in the cytoplasm. The protein localises to the cytoskeleton. The protein resides in the nucleus matrix. Its function is as follows. Exhibits F-actin depolymerizing activity and regulates actin cytoskeleton dynamics. Required for cytokinesis in both mitotic and meiotic cells and for aster migration and separation. Promotes cell motility during ovary development and oogenesis. During larval development, required for the cell rearrangement needed for formation of terminal filaments which are stacks of somatic cells that are important for the initiation of ovarioles. Also required for border cell migration during oogenesis. During border cell migration, required for actin turnover and lamellipodial protrusion. Required for the establishment of planar cell polarity (PCP) where cells adopt a uniform orientation within the plane of an epithelium. During establishment of PCP, required for the redistribution of the PCP core proteins fz and stan/fmi to the proximodistal cell boundary. During pupal development, required for elongation of the retinal cell body and for rhabdomere morphogenesis. Required for mushroom body neuroblast proliferation and axon growth. Plays a role in the positive regulation of protein secretion. Plays a role in the regulation of nuclear localization of actin. Required for the maintenance of epithelial integrity by controlling cell junctions and is also necessary for cell survival and tissue growth through regulation of JNK and yki signaling. In Drosophila melanogaster (Fruit fly), this protein is Cofilin/actin-depolymerizing factor homolog.